The sequence spans 530 residues: UPF0422 protein lpl2888 (530 aa).

An N-terminal signal peptide occupies residues M1–A19. A coiled-coil region spans residues D20 to T66. Residues L50–A81 form a disordered region.

It belongs to the UPF0422 family.

The chain is UPF0422 protein lpl2888 from Legionella pneumophila (strain Lens).